The primary structure comprises 25 residues: Alpha-lytic protease (25 aa).

It belongs to the peptidase S1 family.

It carries out the reaction Preferential cleavage: Ala-|-Xaa, Val-|-Xaa in bacterial cell walls, elastin and other proteins.. The polypeptide is Alpha-lytic protease (Achromobacter lyticus).